The chain runs to 479 residues: Ribulose bisphosphate carboxylase large chain 2 (479 aa).

Substrate contacts are provided by N116 and T166. K168 acts as the Proton acceptor in catalysis. K170 lines the substrate pocket. 3 residues coordinate Mg(2+): K194, D196, and E197. N6-carboxylysine is present on K194. The Proton acceptor role is filled by H287. 3 residues coordinate substrate: R288, H320, and S372.

Belongs to the RuBisCO large chain family. Type I subfamily. Heterohexadecamer of 8 large chains and 8 small chains. Requires Mg(2+) as cofactor.

The enzyme catalyses 2 (2R)-3-phosphoglycerate + 2 H(+) = D-ribulose 1,5-bisphosphate + CO2 + H2O. It catalyses the reaction D-ribulose 1,5-bisphosphate + O2 = 2-phosphoglycolate + (2R)-3-phosphoglycerate + 2 H(+). In terms of biological role, ruBisCO catalyzes two reactions: the carboxylation of D-ribulose 1,5-bisphosphate, the primary event in carbon dioxide fixation, as well as the oxidative fragmentation of the pentose substrate. Both reactions occur simultaneously and in competition at the same active site. This chain is Ribulose bisphosphate carboxylase large chain 2, found in Bradyrhizobium sp. (strain BTAi1 / ATCC BAA-1182).